The sequence spans 469 residues: Probable ribonuclease FAU-1 (469 aa).

Belongs to the FAU-1 family.

Functionally, probable RNase involved in rRNA stability through maturation and/or degradation of precursor rRNAs. Binds to RNA in loop regions with AU-rich sequences. This Pyrococcus abyssi (strain GE5 / Orsay) protein is Probable ribonuclease FAU-1.